The following is a 467-amino-acid chain: MEHTEPEKTDLKSVDLIEMEDTEKLIGTKRKFTDVPIVFRPKKKRVIIEYEPNTLDIPVSDQESFLKLSAPYITQLYSAPNVTEYTLRDFFVRDKIMPGLIQIQEKMFNIKKTSIRPCYICKRPMTKVHWFYLYQCNECGNESLKYRYASRNLYGKNALVIGGRIKLGYQIALKLLRAGCRVMITTRSVHNALEFYNQEPDYNEFKSRLFVYSKGFDLGKARESLPDLVNEITNLFGQQQLDILIQNAAQTICFQENIDNKQQEFESLSEAEILDLVKKRGGKRLTFPPVDWRVDFAERYGRVLDRRSINTWSKNIYETSDEEIISVIQSNMIGSILIDKYLIPNMRPSEDTYVIHVHAKEGTFDTHKTMKHTHTNIAKAGLAMLTRCLAGQSENDTEPRSQWPQIHGVNPGWFSIDEYTIYARTRGKIFNPPIDEIDAASRVVHPIFFQKKSYCKSWIDYKKCHHF.

This is an uncharacterized protein from Acanthamoeba polyphaga (Amoeba).